The following is a 258-amino-acid chain: UPF0246 protein Jann_0444 (258 aa).

It belongs to the UPF0246 family.

The polypeptide is UPF0246 protein Jann_0444 (Jannaschia sp. (strain CCS1)).